The sequence spans 834 residues: uncharacterized protein (834 aa).

Disordered regions lie at residues 1 to 38 (MGSLDYSSKNNSSLGSISSDDESIVLDNENNGAPKAQP), 166 to 280 (DLSS…TPQE), and 767 to 787 (ISRVTPSPPGGATKVRENFHP). Low complexity-rich tracts occupy residues 7–18 (SSKNNSSLGSIS) and 166–252 (DLSS…SSSS).

Belongs to the IIV-6 268L family.

This is an uncharacterized protein from Invertebrate iridescent virus 3 (IIV-3).